Here is a 66-residue protein sequence, read N- to C-terminus: Toxin Aah6 (66 aa).

Positions 2-65 (RDGYVVKNGT…LYGDDGTYCS (64 aa)) constitute an LCN-type CS-alpha/beta domain. Residue N9 is glycosylated (N-linked (GlcNAc...) asparagine). 4 cysteine pairs are disulfide-bonded: C13–C64, C17–C40, C26–C45, and C30–C47.

The protein belongs to the long (4 C-C) scorpion toxin superfamily. Sodium channel inhibitor family. Beta subfamily. In terms of processing, N-glycans are core-fucosylated, heterogeneous and short which could be the result of extensive trimming. As to expression, expressed by the venom gland.

It is found in the secreted. Functionally, beta toxins bind voltage-independently at site-4 of sodium channels and shift the voltage of activation toward more negative potentials thereby affecting sodium channel activation and promoting spontaneous and repetitive firing. This toxin is active only on insects. This toxin has very low anti-insect activity. This Androctonus australis (Sahara scorpion) protein is Toxin Aah6.